The chain runs to 514 residues: 2-isopropylmalate synthase (514 aa).

In terms of domain architecture, Pyruvate carboxyltransferase spans 5 to 267 (LVIFDTTLRD…DTRIHTPEIL (263 aa)). Positions 14, 202, 204, and 238 each coordinate Mn(2+). The segment at 394-514 (RLVALKVGTQ…GSKEHPQAHV (121 aa)) is regulatory domain.

Belongs to the alpha-IPM synthase/homocitrate synthase family. LeuA type 1 subfamily. Homodimer. Mn(2+) serves as cofactor.

It is found in the cytoplasm. The enzyme catalyses 3-methyl-2-oxobutanoate + acetyl-CoA + H2O = (2S)-2-isopropylmalate + CoA + H(+). It functions in the pathway amino-acid biosynthesis; L-leucine biosynthesis; L-leucine from 3-methyl-2-oxobutanoate: step 1/4. In terms of biological role, catalyzes the condensation of the acetyl group of acetyl-CoA with 3-methyl-2-oxobutanoate (2-ketoisovalerate) to form 3-carboxy-3-hydroxy-4-methylpentanoate (2-isopropylmalate). This chain is 2-isopropylmalate synthase, found in Hydrogenovibrio crunogenus (strain DSM 25203 / XCL-2) (Thiomicrospira crunogena).